A 202-amino-acid polypeptide reads, in one-letter code: Thymidylate kinase (202 aa).

Gly-7–Thr-14 lines the ATP pocket.

It belongs to the thymidylate kinase family.

The enzyme catalyses dTMP + ATP = dTDP + ADP. Its function is as follows. Phosphorylation of dTMP to form dTDP in both de novo and salvage pathways of dTTP synthesis. This chain is Thymidylate kinase, found in Ehrlichia chaffeensis (strain ATCC CRL-10679 / Arkansas).